The chain runs to 490 residues: Probable cytosol aminopeptidase (490 aa).

Mn(2+) contacts are provided by Lys-257 and Asp-262. Lys-269 is a catalytic residue. Mn(2+) is bound by residues Asp-281, Asp-341, and Glu-343. Arg-345 is a catalytic residue.

This sequence belongs to the peptidase M17 family. Mn(2+) serves as cofactor.

The protein resides in the cytoplasm. The catalysed reaction is Release of an N-terminal amino acid, Xaa-|-Yaa-, in which Xaa is preferably Leu, but may be other amino acids including Pro although not Arg or Lys, and Yaa may be Pro. Amino acid amides and methyl esters are also readily hydrolyzed, but rates on arylamides are exceedingly low.. It carries out the reaction Release of an N-terminal amino acid, preferentially leucine, but not glutamic or aspartic acids.. Its function is as follows. Presumably involved in the processing and regular turnover of intracellular proteins. Catalyzes the removal of unsubstituted N-terminal amino acids from various peptides. The polypeptide is Probable cytosol aminopeptidase (Prochlorococcus marinus (strain MIT 9312)).